A 73-amino-acid chain; its full sequence is Toxin Td5 (73 aa).

Residues 1 to 7 (IGMVVEC) form the signal peptide. The LCN-type CS-alpha/beta domain occupies 8–70 (KDGYLVGNDG…IWNSATNRCR (63 aa)). Intrachain disulfides connect Cys18-Cys69, Cys22-Cys44, Cys30-Cys50, and Cys34-Cys52. Arginine amide is present on Arg70.

It belongs to the long (4 C-C) scorpion toxin superfamily. Sodium channel inhibitor family. Beta subfamily. Expressed by the venom gland.

Its subcellular location is the secreted. In terms of biological role, beta toxins bind voltage-independently at site-4 of sodium channels (Nav) and shift the voltage of activation toward more negative potentials thereby affecting sodium channel activation and promoting spontaneous and repetitive firing. This Tityus discrepans (Venezuelan scorpion) protein is Toxin Td5.